Reading from the N-terminus, the 310-residue chain is Ribosomal RNA small subunit methyltransferase H (310 aa).

S-adenosyl-L-methionine contacts are provided by residues 32 to 34, aspartate 52, phenylalanine 79, aspartate 100, and glutamine 107; that span reads AGH.

Belongs to the methyltransferase superfamily. RsmH family.

It is found in the cytoplasm. It catalyses the reaction cytidine(1402) in 16S rRNA + S-adenosyl-L-methionine = N(4)-methylcytidine(1402) in 16S rRNA + S-adenosyl-L-homocysteine + H(+). In terms of biological role, specifically methylates the N4 position of cytidine in position 1402 (C1402) of 16S rRNA. The chain is Ribosomal RNA small subunit methyltransferase H from Halalkalibacterium halodurans (strain ATCC BAA-125 / DSM 18197 / FERM 7344 / JCM 9153 / C-125) (Bacillus halodurans).